A 126-amino-acid polypeptide reads, in one-letter code: Large ribosomal subunit protein bL12 (126 aa).

The protein belongs to the bacterial ribosomal protein bL12 family. As to quaternary structure, homodimer. Part of the ribosomal stalk of the 50S ribosomal subunit. Forms a multimeric L10(L12)X complex, where L10 forms an elongated spine to which 2 to 4 L12 dimers bind in a sequential fashion. Binds GTP-bound translation factors.

Its function is as follows. Forms part of the ribosomal stalk which helps the ribosome interact with GTP-bound translation factors. Is thus essential for accurate translation. This is Large ribosomal subunit protein bL12 from Methylocella silvestris (strain DSM 15510 / CIP 108128 / LMG 27833 / NCIMB 13906 / BL2).